The chain runs to 256 residues: 5-oxoprolinase subunit A 1 (256 aa).

It belongs to the LamB/PxpA family. Forms a complex composed of PxpA, PxpB and PxpC.

The enzyme catalyses 5-oxo-L-proline + ATP + 2 H2O = L-glutamate + ADP + phosphate + H(+). Catalyzes the cleavage of 5-oxoproline to form L-glutamate coupled to the hydrolysis of ATP to ADP and inorganic phosphate. This Pseudomonas syringae pv. tomato (strain ATCC BAA-871 / DC3000) protein is 5-oxoprolinase subunit A 1.